Consider the following 490-residue polypeptide: MKNLEPWEAVIGLETHVQLNTKSKIFTAASTAFGDEPNTHIDPVVCGLPGTLPVLNKTVLEYAVKTSLALNLNVAEHCKFDRKQYFYPDLPKNYQISQFDEPLAENGWLEVEIAEKDKETYLKKIGIERLHMEEDAGKLVHIGSDRLAGSKYSLVDYNRAGIALVEIVSKPDIRTGREASEYASEIRRTVRYLGVSDGNMQEGSLRCDVNISVRRGPNAPFGTKVEIKNMNSFSAIQKACEYEIERQIDVYENGGEIYQETRLWDEAKQLTKSMRLKEGSSDYRYFPDPDLGPIEISKEQKDQWLDELPELPSKKRQKYVKELGLSPYDSRVISDEVFMANFFEETVANGADPKLASNWITSDIVGYLKSNKQSFAELKLSPINLAEMINMISKKVISGKIAKEILPELIQDNISPQKVVEEKGLAMISDSASISPIIEELIIEYPKEVKSFKDGKTKLLGFFVGQLMKKTKGKADPKLANKLISEKLNS.

The protein belongs to the GatB/GatE family. GatB subfamily. In terms of assembly, heterotrimer of A, B and C subunits.

The enzyme catalyses L-glutamyl-tRNA(Gln) + L-glutamine + ATP + H2O = L-glutaminyl-tRNA(Gln) + L-glutamate + ADP + phosphate + H(+). The catalysed reaction is L-aspartyl-tRNA(Asn) + L-glutamine + ATP + H2O = L-asparaginyl-tRNA(Asn) + L-glutamate + ADP + phosphate + 2 H(+). Functionally, allows the formation of correctly charged Asn-tRNA(Asn) or Gln-tRNA(Gln) through the transamidation of misacylated Asp-tRNA(Asn) or Glu-tRNA(Gln) in organisms which lack either or both of asparaginyl-tRNA or glutaminyl-tRNA synthetases. The reaction takes place in the presence of glutamine and ATP through an activated phospho-Asp-tRNA(Asn) or phospho-Glu-tRNA(Gln). The chain is Aspartyl/glutamyl-tRNA(Asn/Gln) amidotransferase subunit B from Prochlorococcus marinus subsp. pastoris (strain CCMP1986 / NIES-2087 / MED4).